Reading from the N-terminus, the 586-residue chain is MCGILAVLGCSDDSQAKRVRILELSRRLKHRGPDWSGLHQHGDNYLAHQRLAIVDPASGDQPLFNEDKSIIVTVNGEIYNHEELRKQLPNHKFFTQCDCDVIAHLYEEHGENFVDMLDGIFSFVLLDTRDNSFIVARDAIGVTSLYIGWGLDGSVWIASELKGLNDECEHFEVFPPGHLYSSKEREFRRWYNPPWFNEAIIPSTPYDPLVLRNAFEKAVIKRLMTDVPFGVLLSGGLDSSLVASVTARYLAGTKAAKQWGAKLPSFCVGLKGAPDLKAGKEVADFLGTVHHEFEFTIQDGIDAIEDVIYHTETYDVTTIRAATPMFLMSRKIKSSGVKWVISGEGSDEIFGGYLYFHKAPNREEFHQETCRKIKALHRYDCLRANKSTYAWGLEARVPFLDKDFIKVAMDIDPEFKMIKHDEGRIEKWILRKAFDDEENPYLPKHILYRQKEQFSDGVGYGWIDGIKDHAAKHVTDRMMFNASHIFPFNTPNTKEAYYYRMIFERFFPQNSARLTVPGGPSVACSTEKAIEWDASWSNNLDPSGRAALGVHVSAYEHQINPVTKGVEPEKIIPKIGVSPLGVAIQT.

C2 functions as the For GATase activity in the catalytic mechanism. A Glutamine amidotransferase type-2 domain is found at 2–185; sequence CGILAVLGCS…PGHLYSSKER (184 aa). L-glutamine contacts are provided by residues 50-54, 75-77, and D98; these read RLAIV and NGE. An Asparagine synthetase domain is found at 193-517; sequence PPWFNEAIIP…PQNSARLTVP (325 aa). ATP is bound by residues L232, V268, and 342 to 343; that span reads SG.

As to expression, root nodules.

The catalysed reaction is L-aspartate + L-glutamine + ATP + H2O = L-asparagine + L-glutamate + AMP + diphosphate + H(+). It functions in the pathway amino-acid biosynthesis; L-asparagine biosynthesis; L-asparagine from L-aspartate (L-Gln route): step 1/1. In Pisum sativum (Garden pea), this protein is Asparagine synthetase, nodule [glutamine-hydrolyzing] (AS1).